A 312-amino-acid polypeptide reads, in one-letter code: Ribosomal RNA small subunit methyltransferase H (312 aa).

S-adenosyl-L-methionine is bound by residues 33–35 (SGH), aspartate 53, phenylalanine 80, aspartate 101, and glutamine 108.

Belongs to the methyltransferase superfamily. RsmH family.

It localises to the cytoplasm. It catalyses the reaction cytidine(1402) in 16S rRNA + S-adenosyl-L-methionine = N(4)-methylcytidine(1402) in 16S rRNA + S-adenosyl-L-homocysteine + H(+). Its function is as follows. Specifically methylates the N4 position of cytidine in position 1402 (C1402) of 16S rRNA. This is Ribosomal RNA small subunit methyltransferase H from Desulforapulum autotrophicum (strain ATCC 43914 / DSM 3382 / VKM B-1955 / HRM2) (Desulfobacterium autotrophicum).